A 120-amino-acid polypeptide reads, in one-letter code: UPF0102 protein FRAAL5785 (120 aa).

It belongs to the UPF0102 family.

This is UPF0102 protein FRAAL5785 from Frankia alni (strain DSM 45986 / CECT 9034 / ACN14a).